Consider the following 319-residue polypeptide: tRNA uridine(34) hydroxylase (319 aa).

The Rhodanese domain occupies 127–221 (KQEDTVIIDA…YGKDPEVQGE (95 aa)). Catalysis depends on cysteine 181, which acts as the Cysteine persulfide intermediate.

The protein belongs to the TrhO family.

The enzyme catalyses uridine(34) in tRNA + AH2 + O2 = 5-hydroxyuridine(34) in tRNA + A + H2O. Its function is as follows. Catalyzes oxygen-dependent 5-hydroxyuridine (ho5U) modification at position 34 in tRNAs. This chain is tRNA uridine(34) hydroxylase, found in Bacillus anthracis (strain A0248).